A 160-amino-acid polypeptide reads, in one-letter code: MSDNDDIEVESDEEQPRFQSAADKRAHHNALERKRRDHIKDSFHSLRDSVPSLQGEKASRAQILDKATEYIQYMRRKNHTHQQDIDDLKRQNALLEQQVRALEKARSSAQLQTNYPSSDNSLYTNAKGSTISAFDGGSDSSSESEPEEPQSRKKLRMEAS.

The span at 1–13 shows a compositional bias: acidic residues; it reads MSDNDDIEVESDE. The interval 1–40 is disordered; the sequence is MSDNDDIEVESDEEQPRFQSAADKRAHHNALERKRRDHIK. Serine 2 carries the N-acetylserine modification. A phosphoserine mark is found at serine 2 and serine 11. The bHLH domain maps to 23–74; it reads DKRAHHNALERKRRDHIKDSFHSLRDSVPSLQGEKASRAQILDKATEYIQYM. The segment covering 29 to 40 has biased composition (basic and acidic residues); that stretch reads NALERKRRDHIK. The residue at position 66 (lysine 66) is an N6-acetyllysine. The interval 81–102 is leucine-zipper; it reads HQQDIDDLKRQNALLEQQVRAL. The tract at residues 103–160 is disordered; it reads EKARSSAQLQTNYPSSDNSLYTNAKGSTISAFDGGSDSSSESEPEEPQSRKKLRMEAS. Serine 107 bears the Phosphoserine mark. Polar residues predominate over residues 107–132; it reads SSAQLQTNYPSSDNSLYTNAKGSTIS. Residues 152-156 carry the Nuclear localization signal motif; the sequence is RKKLR. Residues lysine 153 and lysine 154 each carry the N6-acetyllysine modification.

The protein belongs to the MAX family. Efficient DNA binding requires dimerization with another bHLH protein. Binds DNA as a heterodimer with MYC or MAD. Part of the E2F6.com-1 complex in G0 phase composed of E2F6, MGA, MAX, TFDP1, CBX3, BAT8, EUHMTASE1, RING1, RNF2, MBLR, L3MBTL2 and YAF2. Component of some MLL1/MLL complex, at least composed of the core components KMT2A/MLL1, ASH2L, HCFC1/HCF1, WDR5 and RBBP5, as well as the facultative components BACC1, CHD8, E2F6, HSP70, INO80C, KANSL1, LAS1L, MAX, MCRS1, MGA, MYST1/MOF, PELP1, PHF20, PRP31, RING2, RUVB1/TIP49A, RUVB2/TIP49B, SENP3, TAF1, TAF4, TAF6, TAF7, TAF9 and TEX10. Interacts with SPAG9. The heterodimer MYC:MAX interacts with ABI1; the interaction may enhance MYC:MAX transcriptional activity. In terms of processing, reversible lysine acetylation might regulate the nuclear-cytoplasmic shuttling of specific Max complexes. As to expression, high levels found in the brain, heart and lung while lower levels are seen in the liver, kidney and skeletal muscle.

The protein resides in the nucleus. Its subcellular location is the cell projection. It localises to the dendrite. In terms of biological role, transcription regulator. Forms a sequence-specific DNA-binding protein complex with MYC or MAD which recognizes the core sequence 5'-CAC[GA]TG-3'. The MYC:MAX complex is a transcriptional activator, whereas the MAD:MAX complex is a repressor. May repress transcription via the recruitment of a chromatin remodeling complex containing H3 'Lys-9' histone methyltransferase activity. Represses MYC transcriptional activity from E-box elements. The sequence is that of Protein max from Homo sapiens (Human).